Reading from the N-terminus, the 1046-residue chain is DNA-directed RNA polymerase subunit beta' (1046 aa).

Mg(2+)-binding residues include Asp383, Asp385, and Asp387. 4 residues coordinate Zn(2+): Cys752, Cys826, Cys833, and Cys836.

It belongs to the RNA polymerase beta' chain family. In terms of assembly, the RNAP catalytic core consists of 2 alpha, 1 beta, 1 beta' and 1 omega subunit. When a sigma factor is associated with the core the holoenzyme is formed, which can initiate transcription. Requires Mg(2+) as cofactor. Zn(2+) serves as cofactor.

The catalysed reaction is RNA(n) + a ribonucleoside 5'-triphosphate = RNA(n+1) + diphosphate. In terms of biological role, DNA-dependent RNA polymerase catalyzes the transcription of DNA into RNA using the four ribonucleoside triphosphates as substrates. The polypeptide is DNA-directed RNA polymerase subunit beta' (Weissella hellenica).